The primary structure comprises 78 residues: UPF0349 protein YuzB (78 aa).

The protein belongs to the UPF0349 family.

The chain is UPF0349 protein YuzB (yuzB) from Bacillus subtilis (strain 168).